Reading from the N-terminus, the 320-residue chain is ATP-dependent 6-phosphofructokinase (320 aa).

Residue Gly-12 participates in ATP binding. ADP is bound by residues 22–26 and 55–60; these read RSVVR and RYSVSD. Residues 73–74 and 103–106 each bind ATP; these read RF and GDGS. Asp-104 is a Mg(2+) binding site. 126-128 lines the substrate pocket; sequence TID. Residue Asp-128 is the Proton acceptor of the active site. Arg-155 contributes to the ADP binding site. Residues Arg-163 and 170-172 each bind substrate; that span reads MGR. ADP is bound by residues 186–188 and 214–216; these read GCE and KKH. Residues Glu-223, Arg-244, and 250–253 contribute to the substrate site; that span reads HIQR.

It belongs to the phosphofructokinase type A (PFKA) family. ATP-dependent PFK group I subfamily. Prokaryotic clade 'B1' sub-subfamily. In terms of assembly, homotetramer. Requires Mg(2+) as cofactor.

Its subcellular location is the cytoplasm. The enzyme catalyses beta-D-fructose 6-phosphate + ATP = beta-D-fructose 1,6-bisphosphate + ADP + H(+). Its pathway is carbohydrate degradation; glycolysis; D-glyceraldehyde 3-phosphate and glycerone phosphate from D-glucose: step 3/4. Its activity is regulated as follows. Allosterically activated by ADP and other diphosphonucleosides, and allosterically inhibited by phosphoenolpyruvate. Functionally, catalyzes the phosphorylation of D-fructose 6-phosphate to fructose 1,6-bisphosphate by ATP, the first committing step of glycolysis. This chain is ATP-dependent 6-phosphofructokinase, found in Baumannia cicadellinicola subsp. Homalodisca coagulata.